The primary structure comprises 309 residues: Transcription termination/antitermination protein NusG (309 aa).

2 disordered regions span residues 1-24 and 58-91; these read MSDPNLNDDATEPRGLAADTADDE and EGDHIAETDEDIEAGAVETDEDVETDTDEDVEAG. Residues 65–91 show a composition bias toward acidic residues; the sequence is TDEDIEAGAVETDEDVETDTDEDVEAG.

The protein belongs to the NusG family.

Functionally, participates in transcription elongation, termination and antitermination. This chain is Transcription termination/antitermination protein NusG, found in Streptomyces galbus.